The chain runs to 301 residues: Vomeronasal type-1 receptor 4 (301 aa).

Residues 1-15 are Extracellular-facing; sequence MASRYVAVGMMLSQT. Residues 16-36 form a helical membrane-spanning segment; that stretch reads VVGVLGSFSLLLHYLSLHYIG. At 37-48 the chain is on the cytoplasmic side; the sequence is CRLRSADLIVKH. Residues 49 to 69 traverse the membrane as a helical segment; that stretch reads LIAASFLTLLCKGVPQTMAAF. Topologically, residues 70 to 88 are extracellular; sequence RVRYFLNAIGCKLVFYLHR. A helical membrane pass occupies residues 89 to 107; it reads VGRGVSTGTTCLLSVFQVI. At 108 to 126 the chain is on the cytoplasmic side; it reads TVSSRKSRWAKLKEKAPKH. Residues 127-147 form a helical membrane-spanning segment; sequence VGFSVLLCWILCMLVNIIFPI. At 148-185 the chain is on the extracellular side; the sequence is YVTGKRNHTNITVNKDLGDCCGRGNNKIAQTLRAMLLS. 2 N-linked (GlcNAc...) asparagine glycosylation sites follow: asparagine 154 and asparagine 157. The helical transmembrane segment at 186–206 threads the bilayer; the sequence is FPDVLCLGFMLWASSSMVCIL. The Cytoplasmic segment spans residues 207-234; the sequence is HRHKQRVQHIHRSNLSPRASPENRATQS. A helical membrane pass occupies residues 235-255; it reads ILIPVSTFVSSYTLSCLLQVC. The Extracellular segment spans residues 256–264; the sequence is MALLDNPNS. A helical membrane pass occupies residues 265-285; sequence LLVNTSALMSACFPTLSPFVL. Topologically, residues 286-301 are cytoplasmic; it reads MSCDPSVYRLCFAWKR.

This sequence belongs to the G-protein coupled receptor 1 family.

It is found in the cell membrane. In terms of biological role, putative pheromone receptor. This chain is Vomeronasal type-1 receptor 4 (VN1R4), found in Pongo pygmaeus (Bornean orangutan).